The primary structure comprises 713 residues: Glutamine-dependent NAD(+) synthetase (713 aa).

In terms of domain architecture, CN hydrolase spans 4-275 (VTLATCNLNQ…IEVITATVDL (272 aa)). The Proton acceptor; for glutaminase activity role is filled by Glu44. Catalysis depends on Lys114, which acts as the For glutaminase activity. Cys175 (nucleophile; for glutaminase activity) is an active-site residue. The segment at 324–703 (YNTPAEEIGF…QRPQLKNTVN (380 aa)) is ligase. 354 to 361 (PLSGGADS) is an ATP binding site. The active site involves Ser356.

It in the C-terminal section; belongs to the NAD synthetase family.

It catalyses the reaction deamido-NAD(+) + L-glutamine + ATP + H2O = L-glutamate + AMP + diphosphate + NAD(+) + H(+). It functions in the pathway cofactor biosynthesis; NAD(+) biosynthesis; NAD(+) from deamido-NAD(+) (L-Gln route): step 1/1. This chain is Glutamine-dependent NAD(+) synthetase (nadsyn1), found in Dictyostelium discoideum (Social amoeba).